Here is a 387-residue protein sequence, read N- to C-terminus: Synaptotagmin-8 (387 aa).

Topologically, residues 1–34 are extracellular; sequence MGHPPVSPSAPAPAGTTAIPGLIPDLVAGTPWPR. The helical; Signal-anchor for type III membrane protein transmembrane segment at 35-55 threads the bilayer; sequence WALIAGALAAGVLLVSCLLCA. Topologically, residues 56–387 are cytoplasmic; that stretch reads ACCCCRRHRK…LRLRLPLPHS (332 aa). The segment at 70 to 99 is disordered; that stretch reads KESVGLGSARGTTTTHLVQPDVDGLESSPG. C2 domains lie at 103 to 219 and 231 to 346; these read QWGC…EHWY and QVGE…QHWA.

This sequence belongs to the synaptotagmin family. Homodimer or homooligomer. Homodimerization and homooligomerization do not depend on Ca(2+). Interacts with SYNCRIP isoform 2 C-terminus. Binds inositol 1,3,4,5-tetrakisphosphate (IP4). Binds to AP2 in a Ca(2+)-independent manner. Interacts with STX1A, STX1B and STX2; the interaction is Ca(2+)-dependent.

The protein localises to the cell membrane. The protein resides in the cytoplasmic vesicle. It localises to the secretory vesicle. It is found in the acrosome. In terms of biological role, involved in the trafficking and exocytosis of secretory vesicles in non-neuronal tissues. Mediates Ca(2+)-regulation of exocytosis acrosomal reaction in sperm. May mediate Ca(2+)-regulation of exocytosis in insulin secreted cells. This Homo sapiens (Human) protein is Synaptotagmin-8 (SYT8).